The chain runs to 255 residues: Putative deoxyribonuclease tatdn3-B (255 aa).

Residues histidine 11, histidine 13, glutamate 106, histidine 129, histidine 152, and aspartate 199 each contribute to the Zn(2+) site.

The protein belongs to the metallo-dependent hydrolases superfamily. TatD-type hydrolase family. It depends on Mn(2+) as a cofactor. Ca(2+) serves as cofactor. Requires Mg(2+) as cofactor. The cofactor is Zn(2+).

The protein localises to the nucleus. With respect to regulation, the 3'-exonuclease activity is sensitive to the metal ion present in the active site, whereas the AP endodeoxyribonuclease activity is observed in a variety of divalent metal cofactors. 3'-exoxonuclease activity is suppressed in the presence of Ca(2+), Zn(2+) and Ni(2+). Its function is as follows. Exhibits 3'-exonuclease activities and apurinic/apyrimidinic (AP) endonuclease (in vitro). Show preferential AP endonuclease activity on double-stranded DNA substrates and 3'- exonuclease activity on single-stranded DNA. This Xenopus laevis (African clawed frog) protein is Putative deoxyribonuclease tatdn3-B (tatdn3-b).